The chain runs to 100 residues: ATP synthase subunit c (100 aa).

A run of 2 helical transmembrane segments spans residues 27-47 (SVIAAGIGLGLAALGGAIGMG) and 72-92 (FIALAMIEAQVIYALVITLIV).

Belongs to the ATPase C chain family. As to quaternary structure, F-type ATPases have 2 components, F(1) - the catalytic core - and F(0) - the membrane proton channel. F(1) has five subunits: alpha(3), beta(3), gamma(1), delta(1), epsilon(1). F(0) has three main subunits: a(1), b(2) and c(10-14). The alpha and beta chains form an alternating ring which encloses part of the gamma chain. F(1) is attached to F(0) by a central stalk formed by the gamma and epsilon chains, while a peripheral stalk is formed by the delta and b chains.

Its subcellular location is the cell inner membrane. Its function is as follows. F(1)F(0) ATP synthase produces ATP from ADP in the presence of a proton or sodium gradient. F-type ATPases consist of two structural domains, F(1) containing the extramembraneous catalytic core and F(0) containing the membrane proton channel, linked together by a central stalk and a peripheral stalk. During catalysis, ATP synthesis in the catalytic domain of F(1) is coupled via a rotary mechanism of the central stalk subunits to proton translocation. The polypeptide is ATP synthase subunit c (Campylobacter curvus (strain 525.92)).